A 404-amino-acid polypeptide reads, in one-letter code: Ammonium transporter (404 aa).

The next 9 helical transmembrane spans lie at 7–27 (VFMF…ALFY), 44–64 (FSSI…LAFA), 96–116 (LFMM…SGAF), 125–145 (FLLF…HWVW), 158–178 (FAGG…LAIV), 227–247 (INTN…EWII), 254–274 (LGAV…AGFV), 277–297 (FASI…VFSL), and 352–372 (IVAI…IIKI).

It belongs to the ammonia transporter channel (TC 1.A.11.2) family. Interacts with NrgB for a correct localization of the latter. GlnK-AmtB complex interacts with TnrA.

It is found in the cell membrane. Functions as an ammonium and methylammonium transporter in the absence of glutamine. Required for ammonium utilization at low concentrations or at low pH values, when ammonium is the single nitrogen source. Required for binding of NrgB to the membrane. Interaction between GlnK-AmtB complex and TnrA protects TnrA from proteolytic degradation. This is Ammonium transporter from Bacillus subtilis (strain 168).